Consider the following 572-residue polypeptide: Proline--tRNA ligase (572 aa).

The protein belongs to the class-II aminoacyl-tRNA synthetase family. ProS type 1 subfamily. In terms of assembly, homodimer.

Its subcellular location is the cytoplasm. It carries out the reaction tRNA(Pro) + L-proline + ATP = L-prolyl-tRNA(Pro) + AMP + diphosphate. Its function is as follows. Catalyzes the attachment of proline to tRNA(Pro) in a two-step reaction: proline is first activated by ATP to form Pro-AMP and then transferred to the acceptor end of tRNA(Pro). As ProRS can inadvertently accommodate and process non-cognate amino acids such as alanine and cysteine, to avoid such errors it has two additional distinct editing activities against alanine. One activity is designated as 'pretransfer' editing and involves the tRNA(Pro)-independent hydrolysis of activated Ala-AMP. The other activity is designated 'posttransfer' editing and involves deacylation of mischarged Ala-tRNA(Pro). The misacylated Cys-tRNA(Pro) is not edited by ProRS. This is Proline--tRNA ligase from Salmonella dublin (strain CT_02021853).